Here is a 177-residue protein sequence, read N- to C-terminus: Large ribosomal subunit protein uL6 (177 aa).

Belongs to the universal ribosomal protein uL6 family. In terms of assembly, part of the 50S ribosomal subunit.

This protein binds to the 23S rRNA, and is important in its secondary structure. It is located near the subunit interface in the base of the L7/L12 stalk, and near the tRNA binding site of the peptidyltransferase center. The polypeptide is Large ribosomal subunit protein uL6 (Rickettsia canadensis (strain McKiel)).